A 385-amino-acid polypeptide reads, in one-letter code: V-type proton ATPase subunit C (385 aa).

Belongs to the V-ATPase C subunit family. As to quaternary structure, V-ATPase is a heteromultimeric enzyme made up of two complexes: the ATP-hydrolytic V1 complex and the proton translocation V0 complex. The V1 complex consists of three catalytic AB heterodimers that form a heterohexamer, three peripheral stalks each consisting of EG heterodimers, one central rotor including subunits D and F, and the regulatory subunits C and H. The proton translocation complex V0 consists of the proton transport subunit a, a ring of proteolipid subunits c9c'', rotary subunit d, subunits e and f, and the accessory subunits vah-19/Ac45 and vah-20/PRR. Interacts with V-type proton ATPase subunits a1 unc-32, a2 vha-5 and a3 vha-6.

It is found in the cytoplasm. It localises to the membrane. Subunit of the V1 complex of vacuolar(H+)-ATPase (V-ATPase), a multisubunit enzyme composed of a peripheral complex (V1) that hydrolyzes ATP and a membrane integral complex (V0) that translocates protons. V-ATPase is responsible for acidifying and maintaining the pH of intracellular compartments and in some cell types, is targeted to the plasma membrane, where it is responsible for acidifying the extracellular environment. Subunit C is necessary for the assembly of the catalytic sector of the enzyme and is likely to have a specific function in its catalytic activity. Has roles in embryogenesis and ovulation. This is V-type proton ATPase subunit C from Caenorhabditis briggsae.